A 591-amino-acid polypeptide reads, in one-letter code: Aspartate--tRNA(Asp/Asn) ligase (591 aa).

Glu-174 lines the L-aspartate pocket. An aspartate region spans residues 198–201; it reads QLFK. An L-aspartate-binding site is contributed by Arg-220. Residues 220–222 and Gln-229 each bind ATP; that span reads RDE. An L-aspartate-binding site is contributed by His-450. Residue Glu-483 coordinates ATP. Position 490 (Arg-490) interacts with L-aspartate. ATP is bound at residue 535–538; sequence GLDR.

It belongs to the class-II aminoacyl-tRNA synthetase family. Type 1 subfamily. As to quaternary structure, homodimer.

It is found in the cytoplasm. The catalysed reaction is tRNA(Asx) + L-aspartate + ATP = L-aspartyl-tRNA(Asx) + AMP + diphosphate. Its function is as follows. Aspartyl-tRNA synthetase with relaxed tRNA specificity since it is able to aspartylate not only its cognate tRNA(Asp) but also tRNA(Asn). Reaction proceeds in two steps: L-aspartate is first activated by ATP to form Asp-AMP and then transferred to the acceptor end of tRNA(Asp/Asn). The sequence is that of Aspartate--tRNA(Asp/Asn) ligase from Ectopseudomonas mendocina (strain ymp) (Pseudomonas mendocina).